The chain runs to 259 residues: Pyrroloquinoline-quinone synthase (259 aa).

This sequence belongs to the PqqC family.

It carries out the reaction 6-(2-amino-2-carboxyethyl)-7,8-dioxo-1,2,3,4,7,8-hexahydroquinoline-2,4-dicarboxylate + 3 O2 = pyrroloquinoline quinone + 2 H2O2 + 2 H2O + H(+). Its pathway is cofactor biosynthesis; pyrroloquinoline quinone biosynthesis. Functionally, ring cyclization and eight-electron oxidation of 3a-(2-amino-2-carboxyethyl)-4,5-dioxo-4,5,6,7,8,9-hexahydroquinoline-7,9-dicarboxylic-acid to PQQ. This chain is Pyrroloquinoline-quinone synthase, found in Bradyrhizobium sp. (strain ORS 278).